The following is a 121-amino-acid chain: MEYVLIYNIWFFSFLQDKPCFCFVDYACSIFLLSSYCGNCLTAVATKPNEMATTPKSIPLLTLVLLPSTTPSSSVLINVSSVSFFSSLESFCFTLALLSLLIPPLKLLCVKTKFFPLSSSI.

Helical transmembrane passes span 26-46 (YACS…AVAT), 57-77 (SIPL…SVLI), and 90-110 (SFCF…LLCV).

The protein localises to the membrane. This is an uncharacterized protein from Saccharomyces cerevisiae (strain ATCC 204508 / S288c) (Baker's yeast).